The primary structure comprises 120 residues: Large ribosomal subunit protein uL18 (120 aa).

It belongs to the universal ribosomal protein uL18 family. In terms of assembly, part of the 50S ribosomal subunit; part of the 5S rRNA/L5/L18/L25 subcomplex. Contacts the 5S and 23S rRNAs.

Functionally, this is one of the proteins that bind and probably mediate the attachment of the 5S RNA into the large ribosomal subunit, where it forms part of the central protuberance. In Oleidesulfovibrio alaskensis (strain ATCC BAA-1058 / DSM 17464 / G20) (Desulfovibrio alaskensis), this protein is Large ribosomal subunit protein uL18.